Here is a 698-residue protein sequence, read N- to C-terminus: Transferrin-binding protein B (698 aa).

The N-terminal stretch at 1–20 is a signal peptide; sequence MNNPLVNQAAMVLPVFLLSA. A lipid anchor (N-palmitoyl cysteine) is attached at C21. A lipid anchor (S-diacylglycerol cysteine) is attached at C21. Disordered stretches follow at residues 33-58, 83-102, 294-324, 349-383, 428-479, and 669-698; these read VDTE…QKDQ, IKLS…KNPS, FSGK…SLSG, GSAK…SENS, ESGK…GDAN, and TKNA…KPVQ. The segment covering 46–56 has biased composition (polar residues); it reads DVSSEKPQAQK. Basic and acidic residues predominate over residues 299-315; that stretch reads EATDKPKNDGETKEHPF. The segment covering 369–383 has biased composition (low complexity); sequence AAASNGAAGTSSENS. The segment covering 460-476 has biased composition (polar residues); that stretch reads QAGTAENGNPAASNTAG. Over residues 671-686 the composition is skewed to low complexity; sequence NATDASGNGNSASSAT.

This sequence belongs to the TbpB family. In terms of assembly, binds only human holo-transferrin (TF), via the TF C-terminus. Forms a large complex with TbpA and TF. Interacts via its C-terminal domain with Slam1.

It is found in the cell outer membrane. It localises to the cell surface. Neisseria acquires iron by extracting it from serum transferrin (TF) in its human host. Acts as a TF receptor and is required for TF utilization. Involved in the initial capture of TF. Helps select only those TF molecules that can be used as an iron source and concentrates them on the cell surface, maintaining the iron-loaded status of the TF C-terminal lobe until its delivery to TbpA. This is Transferrin-binding protein B from Neisseria meningitidis serogroup A / serotype 4A (strain DSM 15465 / Z2491).